A 955-amino-acid chain; its full sequence is Anion exchange protein 4 (955 aa).

Disordered regions lie at residues 20-50 (VGQLDSGPSSGPCPDDPSDTGSRELGPPEDP), 154-190 (HTQTTGSRPCWGPAQSRKAAHNKEAPMQQQCQSPLRQ), and 331-352 (PHRTQAEDRHRNGPLAPSPELQ). A run of 4 helical transmembrane segments spans residues 387–407 (AVLYIYLATVTNAITFGGLLG), 415–435 (GVLESLLGTAVAGAAFCLMAG), 472–492 (VGIWVAVFCLALVATEASVLV), and 503–523 (FCALISLIFIYDAVGKMLNLA). The membrane (anion exchange) stretch occupies residues 387–955 (AVLYIYLATV…KAPEINISVN (569 aa)). N-linked (GlcNAc...) asparagine glycans are attached at residues Asn548 and Asn572. The next 7 helical transmembrane spans lie at 596 to 616 (VPDIAFFSLLLFLTSFLFAIA), 637 to 657 (FSSILAILLGCGLDALLGLAM), 684 to 704 (PWWLSVAAALPALLLSILIFM), 730 to 750 (LFCVALLMLLTSVLGLPWYVS), 785 to 804 (LTGLAVFTLTGVSIFLAPVL), 811 to 830 (VLYGIFLYMGVAALSSIQFM), and 871 to 891 (LWIIKSTPAAIIFPLMLLGLV). Residues 918 to 955 (RNVPEKGLEPGHSFSGSDSEDSELMYQPKAPEINISVN) are disordered. N-linked (GlcNAc...) asparagine glycosylation occurs at Asn951.

Belongs to the anion exchanger (TC 2.A.31) family. Highly expressed in kidney. Expressed in the outer medulla and the inner medulla in the kidney cortex. Only expressed in beta-intercalated cells.

Its subcellular location is the lateral cell membrane. The protein localises to the apical cell membrane. It localises to the basolateral cell membrane. It catalyses the reaction 2 hydrogencarbonate(out) + chloride(in) + Na(+)(out) = 2 hydrogencarbonate(in) + chloride(out) + Na(+)(in). It carries out the reaction K(+)(in) + 2 hydrogencarbonate(in) + chloride(out) = K(+)(out) + 2 hydrogencarbonate(out) + chloride(in). The enzyme catalyses Li(+)(in) + 2 hydrogencarbonate(in) + chloride(out) = Li(+)(out) + 2 hydrogencarbonate(out) + chloride(in). The catalysed reaction is Rb(+)(in) + 2 hydrogencarbonate(in) + chloride(out) = Rb(+)(out) + 2 hydrogencarbonate(out) + chloride(in). It catalyses the reaction Cs(+)(in) + 2 hydrogencarbonate(in) + chloride(out) = Cs(+)(out) + 2 hydrogencarbonate(out) + chloride(in). In terms of biological role, electroneutral Cl(-)/HCO3(-) antiporter that favors chloride ion entry and efflux of hydrogencarbonate and sodium ion across the basolateral membrane and may participat in salivary secretion. Also mediates Cl(-)/HCO3(-) exchange activity in the presence of K(+) as well as Cs(+), Li(+), and Rb(+). Does not contribute to Cl(-)/HCO3(-) exchanger in the apical membrane of the upper villous epithelium. This is Anion exchange protein 4 from Oryctolagus cuniculus (Rabbit).